Reading from the N-terminus, the 120-residue chain is U-scoloptoxin(20)-Cw1a (120 aa).

The first 26 residues, 1–26 (MNSTDRLLGVLLAVVALILLIRISEA), serve as a signal peptide directing secretion. Residues 87–106 (SSGKSLTTTKDSSESRKKEI) are disordered. Positions 97 to 106 (DSSESRKKEI) are enriched in basic and acidic residues.

This sequence belongs to the scoloptoxin-20 family. Post-translationally, contains 3 disulfide bonds. Expressed by the venom gland.

Its subcellular location is the secreted. The polypeptide is U-scoloptoxin(20)-Cw1a (Cormocephalus westwoodi (Westwood's green centipede)).